The chain runs to 221 residues: ATP-dependent dethiobiotin synthetase BioD (221 aa).

11–16 lines the ATP pocket; sequence GVGKTY. Position 15 (Thr15) interacts with Mg(2+). Lys36 is a catalytic residue. Substrate is bound at residue Thr40. ATP-binding positions include Asp48 and 107-110; that span reads EGAG. Mg(2+)-binding residues include Asp48 and Glu107.

The protein belongs to the dethiobiotin synthetase family. As to quaternary structure, homodimer. It depends on Mg(2+) as a cofactor.

It is found in the cytoplasm. The enzyme catalyses (7R,8S)-7,8-diammoniononanoate + CO2 + ATP = (4R,5S)-dethiobiotin + ADP + phosphate + 3 H(+). Its pathway is cofactor biosynthesis; biotin biosynthesis; biotin from 7,8-diaminononanoate: step 1/2. Functionally, catalyzes a mechanistically unusual reaction, the ATP-dependent insertion of CO2 between the N7 and N8 nitrogen atoms of 7,8-diaminopelargonic acid (DAPA, also called 7,8-diammoniononanoate) to form a ureido ring. The protein is ATP-dependent dethiobiotin synthetase BioD of Hydrogenobaculum sp. (strain Y04AAS1).